Consider the following 431-residue polypeptide: Enolase (431 aa).

Gln164 contributes to the (2R)-2-phosphoglycerate binding site. Glu206 (proton donor) is an active-site residue. Mg(2+) is bound by residues Asp243, Glu288, and Asp315. Lys340, Arg369, Ser370, and Lys391 together coordinate (2R)-2-phosphoglycerate. The active-site Proton acceptor is Lys340.

The protein belongs to the enolase family. The cofactor is Mg(2+).

It localises to the cytoplasm. The protein resides in the secreted. It is found in the cell surface. It catalyses the reaction (2R)-2-phosphoglycerate = phosphoenolpyruvate + H2O. It participates in carbohydrate degradation; glycolysis; pyruvate from D-glyceraldehyde 3-phosphate: step 4/5. Functionally, catalyzes the reversible conversion of 2-phosphoglycerate (2-PG) into phosphoenolpyruvate (PEP). It is essential for the degradation of carbohydrates via glycolysis. The protein is Enolase of Fervidobacterium nodosum (strain ATCC 35602 / DSM 5306 / Rt17-B1).